The sequence spans 968 residues: Alanine--tRNA ligase, cytoplasmic (968 aa).

Residue Met1 is modified to N-acetylmethionine. Residues Arg77, His95, Trp176, and 214–216 (IWN) each bind ATP. Residues Asn216 and Asp239 each coordinate L-alanine. Residue Gly243 participates in ATP binding. A phosphoserine mark is found at Ser399 and Ser555. His605, His609, Cys723, and His727 together coordinate Zn(2+). A Nuclear localization signal motif is present at residues 750–763 (RRIVAVTGAEAQKA). An N6-acetyllysine modification is found at Lys876. Lys943 bears the N6,N6,N6-trimethyllysine; alternate mark. The residue at position 943 (Lys943) is an N6,N6-dimethyllysine; alternate. Lys943 is modified (N6-methyllysine; alternate).

Belongs to the class-II aminoacyl-tRNA synthetase family. In terms of assembly, monomer. Interacts with ANKRD16; the interaction is direct. It depends on Zn(2+) as a cofactor. ISGylated. Post-translationally, methylation at 'Lys-943' by METTL21C.

It localises to the cytoplasm. The protein resides in the nucleus. It catalyses the reaction tRNA(Ala) + L-alanine + ATP = L-alanyl-tRNA(Ala) + AMP + diphosphate. It carries out the reaction (S)-lactate + ATP + H(+) = (S)-lactoyl-AMP + diphosphate. The enzyme catalyses (S)-lactoyl-AMP + L-lysyl-[protein] = N(6)-[(S)-lactoyl]-L-lysyl-[protein] + AMP + 2 H(+). The protein lactyltransferase activity is inhibited by beta-alanine. Its function is as follows. Catalyzes the attachment of alanine to tRNA(Ala) in a two-step reaction: alanine is first activated by ATP to form Ala-AMP and then transferred to the acceptor end of tRNA(Ala). Also edits incorrectly charged tRNA(Ala) via its editing domain. In presence of high levels of lactate, also acts as a protein lactyltransferase that mediates lactylation of lysine residues in target proteins, such as TEAD1, TP53/p53 and YAP1. Protein lactylation takes place in a two-step reaction: lactate is first activated by ATP to form lactate-AMP and then transferred to lysine residues of target proteins. Acts as an inhibitor of TP53/p53 activity by catalyzing lactylation of TP53/p53. Acts as a positive regulator of the Hippo pathway by mediating lactylation of TEAD1 and YAP1. The chain is Alanine--tRNA ligase, cytoplasmic from Mus musculus (Mouse).